A 98-amino-acid chain; its full sequence is Homeobox protein SMOX-4 (98 aa).

The homeobox DNA-binding region spans 37 to 96 (SFRNRTAFTDYQLICLEREFSHIQYLSRIDRIHLAQNLNLTEKQVKIWFQNRRVRWRKRN).

It is found in the nucleus. This Schistosoma mansoni (Blood fluke) protein is Homeobox protein SMOX-4 (SMOX-4).